Consider the following 212-residue polypeptide: Large ribosomal subunit protein uL1 (212 aa).

It belongs to the universal ribosomal protein uL1 family. In terms of assembly, part of the 50S ribosomal subunit.

Its function is as follows. Binds directly to 23S rRNA. Probably involved in E site tRNA release. In terms of biological role, protein L1 is also a translational repressor protein, it controls the translation of its operon by binding to its mRNA. This is Large ribosomal subunit protein uL1 from Haloquadratum walsbyi (strain DSM 16790 / HBSQ001).